Consider the following 267-residue polypeptide: Pro-opiomelanocortin (267 aa).

The N-terminal stretch at Met-1 to Gly-26 is a signal peptide. At Phe-87 the chain carries Phenylalanine amide. 2 disordered regions span residues Gly-88–Lys-156 and Lys-215–Thr-242. N-linked (GlcNAc...) asparagine glycosylation occurs at Asn-91. Residues Ser-94–Gly-105 show a composition bias toward gly residues. Residues Glu-109–Asp-133 constitute a propeptide that is removed on maturation. A compositionally biased stretch (basic and acidic residues) spans Arg-131–Arg-143. Ser-136 carries the post-translational modification N-acetylserine; in Corticotropin. Val-148 is modified (valine amide). Residues Lys-215–Tyr-237 are compositionally biased toward basic and acidic residues.

It belongs to the POMC family. Specific enzymatic cleavages at paired basic residues yield the different active peptides. ACTH and MSH are produced by the pituitary gland.

Its subcellular location is the secreted. Functionally, stimulates the adrenal glands to release cortisol. Its function is as follows. Anorexigenic peptide. Increases the pigmentation of skin by increasing melanin production in melanocytes. Increases the pigmentation of skin by increasing melanin production in melanocytes. In terms of biological role, endogenous orexigenic opiate. Functionally, endogenous opiate. The protein is Pro-opiomelanocortin (POMC) of Sus scrofa (Pig).